Reading from the N-terminus, the 260-residue chain is Homeobox-leucine zipper protein HOX25 (260 aa).

Residues 1–10 show a composition bias toward acidic residues; that stretch reads MEDLVDELYG. Disordered stretches follow at residues 1–24, 121–145, and 190–221; these read MEDLVDELYGVDEQGSSSAAARKR, ANGKSPSPSPAPAEQTAVPAAPESA, and SPESYFAGARSPPSSSEDDCGGAGSDDDYPSS. The segment at residues 19 to 79 is a DNA-binding region (homeobox); the sequence is AAARKRRLTA…NRRARWKTKQ (61 aa). The interval 78 to 122 is leucine-zipper; it reads KQLELDFDRLRAAHDELLAGRAALAADNESLRSQVILLTEKLQAN. Acidic residues predominate over residues 205 to 218; it reads SEDDCGGAGSDDDY.

This sequence belongs to the HD-ZIP homeobox family. Class I subfamily. As to expression, expressed in roots, leaf sheaths and blades and panicles.

The protein resides in the nucleus. In terms of biological role, probable transcription factor. This chain is Homeobox-leucine zipper protein HOX25 (HOX25), found in Oryza sativa subsp. indica (Rice).